We begin with the raw amino-acid sequence, 253 residues long: Imidazole glycerol phosphate synthase subunit HisF (253 aa).

Catalysis depends on residues Asp-11 and Asp-130.

This sequence belongs to the HisA/HisF family. Heterodimer of HisH and HisF.

The protein localises to the cytoplasm. It catalyses the reaction 5-[(5-phospho-1-deoxy-D-ribulos-1-ylimino)methylamino]-1-(5-phospho-beta-D-ribosyl)imidazole-4-carboxamide + L-glutamine = D-erythro-1-(imidazol-4-yl)glycerol 3-phosphate + 5-amino-1-(5-phospho-beta-D-ribosyl)imidazole-4-carboxamide + L-glutamate + H(+). It functions in the pathway amino-acid biosynthesis; L-histidine biosynthesis; L-histidine from 5-phospho-alpha-D-ribose 1-diphosphate: step 5/9. Functionally, IGPS catalyzes the conversion of PRFAR and glutamine to IGP, AICAR and glutamate. The HisF subunit catalyzes the cyclization activity that produces IGP and AICAR from PRFAR using the ammonia provided by the HisH subunit. The chain is Imidazole glycerol phosphate synthase subunit HisF from Ruegeria pomeroyi (strain ATCC 700808 / DSM 15171 / DSS-3) (Silicibacter pomeroyi).